Here is a 118-residue protein sequence, read N- to C-terminus: Superoxide-generating NADPH oxidase light chain subunit (118 aa).

The next 4 membrane-spanning stretches (helical) occupy residues 9 to 29, 36 to 56, 62 to 82, and 83 to 103; these read WAAM…IMGI, IAIY…PLSF, AIFH…VLCY, and FLVP…VFLI.

It belongs to the p22phox family. In terms of assembly, composed of a heavy chain and a light chain.

The protein localises to the cell membrane. Functionally, critical component of the membrane-bound oxidase of phagocytes that generates superoxide. This Dictyostelium discoideum (Social amoeba) protein is Superoxide-generating NADPH oxidase light chain subunit (cybA).